Here is a 457-residue protein sequence, read N- to C-terminus: Exodeoxyribonuclease 7 large subunit (457 aa).

This sequence belongs to the XseA family. In terms of assembly, heterooligomer composed of large and small subunits.

Its subcellular location is the cytoplasm. The catalysed reaction is Exonucleolytic cleavage in either 5'- to 3'- or 3'- to 5'-direction to yield nucleoside 5'-phosphates.. Bidirectionally degrades single-stranded DNA into large acid-insoluble oligonucleotides, which are then degraded further into small acid-soluble oligonucleotides. The polypeptide is Exodeoxyribonuclease 7 large subunit (Escherichia coli O127:H6 (strain E2348/69 / EPEC)).